We begin with the raw amino-acid sequence, 1012 residues long: Formate dehydrogenase 2 subunit alpha (cytochrome c-553) (1012 aa).

Positions Met1 to Ala33 form a signal peptide, tat-type signal. One can recognise a 4Fe-4S Mo/W bis-MGD-type domain in the interval Ala43–His99. [4Fe-4S] cluster-binding residues include Cys50, Cys53, Cys57, and Cys85. Position 189 (Sec189) interacts with W-bis(molybdopterin guanine dinucleotide). Sec189 is a non-standard amino acid (selenocysteine). 5 residues coordinate Ca(2+): Thr389, Arg391, Lys394, Leu424, and Asn426.

Belongs to the prokaryotic molybdopterin-containing oxidoreductase family. Heterotrimer of cytochrome c3 FDH2C and formate dehydrogenase FDH2 alpha and beta subunits that forms the FdhABC(3) complex. [4Fe-4S] cluster is required as a cofactor. It depends on W-bis(molybdopterin guanine dinucleotide) as a cofactor. Post-translationally, predicted to be exported by the Tat system. The position of the signal peptide cleavage has not been experimentally proven.

Its subcellular location is the periplasm. It carries out the reaction 2 Fe(III)-[cytochrome c553] + formate = 2 Fe(II)-[cytochrome c553] + CO2 + H(+). Functionally, alpha chain of the formate dehydrogenase (FDH) that catalyzes the reversible two-electron oxidation of formate to carbon dioxide. The alpha subunit of formate dehydrogenase forms the active site. In Nitratidesulfovibrio vulgaris (strain ATCC 29579 / DSM 644 / CCUG 34227 / NCIMB 8303 / VKM B-1760 / Hildenborough) (Desulfovibrio vulgaris), this protein is Formate dehydrogenase 2 subunit alpha (cytochrome c-553).